The primary structure comprises 108 residues: MRKKFKRQEYARYKKLGEKWRRPRGRTSKMRRYEKGKPAMPAIGYRKPSEVRGLHPSGYEDVLVSNMRELEALDPEKQAARIASAVGARKKTLMLEKARELGIKVLNP.

Basic residues predominate over residues 21–30 (RRPRGRTSKM). Residues 21 to 44 (RRPRGRTSKMRRYEKGKPAMPAIG) form a disordered region.

This sequence belongs to the eukaryotic ribosomal protein eL32 family.

The chain is Large ribosomal subunit protein eL32 (rpl32e) from Methanothermobacter thermautotrophicus (strain ATCC 29096 / DSM 1053 / JCM 10044 / NBRC 100330 / Delta H) (Methanobacterium thermoautotrophicum).